The primary structure comprises 475 residues: Ribulose bisphosphate carboxylase large chain (475 aa).

A propeptide spanning residues Met-1–Ser-2 is cleaved from the precursor. Pro-3 bears the N-acetylproline mark. Lys-14 carries the N6,N6,N6-trimethyllysine modification. Positions 123 and 173 each coordinate substrate. Lys-175 serves as the catalytic Proton acceptor. Lys-177 lines the substrate pocket. Lys-201, Asp-203, and Glu-204 together coordinate Mg(2+). Lys-201 is modified (N6-carboxylysine). Residue His-294 is the Proton acceptor of the active site. Substrate contacts are provided by Arg-295, His-327, and Ser-379.

This sequence belongs to the RuBisCO large chain family. Type I subfamily. In terms of assembly, heterohexadecamer of 8 large chains and 8 small chains; disulfide-linked. The disulfide link is formed within the large subunit homodimers. The cofactor is Mg(2+). In terms of processing, the disulfide bond which can form in the large chain dimeric partners within the hexadecamer appears to be associated with oxidative stress and protein turnover.

The protein resides in the plastid. Its subcellular location is the chloroplast. It carries out the reaction 2 (2R)-3-phosphoglycerate + 2 H(+) = D-ribulose 1,5-bisphosphate + CO2 + H2O. It catalyses the reaction D-ribulose 1,5-bisphosphate + O2 = 2-phosphoglycolate + (2R)-3-phosphoglycerate + 2 H(+). Its function is as follows. RuBisCO catalyzes two reactions: the carboxylation of D-ribulose 1,5-bisphosphate, the primary event in carbon dioxide fixation, as well as the oxidative fragmentation of the pentose substrate in the photorespiration process. Both reactions occur simultaneously and in competition at the same active site. The sequence is that of Ribulose bisphosphate carboxylase large chain from Zygnema circumcarinatum (Green alga).